The sequence spans 1268 residues: ATP-dependent helicase/nuclease subunit A (1268 aa).

The UvrD-like helicase ATP-binding domain maps to 3–476 (TKWTEEQELA…IMLYKNFRSR (474 aa)). 24-31 (AAAGSGKT) serves as a coordination point for ATP. In terms of domain architecture, UvrD-like helicase C-terminal spans 528–824 (IENLKVAGDI…RIMSIHKSKG (297 aa)).

This sequence belongs to the helicase family. AddA subfamily. In terms of assembly, heterodimer of AddA and AddB/RexB. Mg(2+) serves as cofactor.

The catalysed reaction is Couples ATP hydrolysis with the unwinding of duplex DNA by translocating in the 3'-5' direction.. The enzyme catalyses ATP + H2O = ADP + phosphate + H(+). Functionally, the heterodimer acts as both an ATP-dependent DNA helicase and an ATP-dependent, dual-direction single-stranded exonuclease. Recognizes the chi site generating a DNA molecule suitable for the initiation of homologous recombination. The AddA nuclease domain is required for chi fragment generation; this subunit has the helicase and 3' -&gt; 5' nuclease activities. The chain is ATP-dependent helicase/nuclease subunit A from Clostridium perfringens (strain 13 / Type A).